A 464-amino-acid chain; its full sequence is Bifunctional protein GlmU (464 aa).

Positions 1–236 are pyrophosphorylase; it reads MRAVILAAGL…PTEALGVNTR (236 aa). UDP-N-acetyl-alpha-D-glucosamine is bound by residues 6 to 9, Lys20, and 77 to 78; these read LAAG and GT. Residue Asp102 coordinates Mg(2+). UDP-N-acetyl-alpha-D-glucosamine contacts are provided by Gly145, Glu161, Asn176, and Asn234. Asn234 contacts Mg(2+). The interval 237 to 257 is linker; sequence WDLALVENVIKLKIARYWAER. Residues 258–464 are N-acetyltransferase; sequence GVTVHYPETV…GRGKKKLQKD (207 aa). Residues Arg340 and Lys358 each contribute to the UDP-N-acetyl-alpha-D-glucosamine site. Residue His370 is the Proton acceptor of the active site. 2 residues coordinate UDP-N-acetyl-alpha-D-glucosamine: Tyr373 and Asn384. Acetyl-CoA contacts are provided by residues Ala387, 393–394, Ser412, Gly430, and Arg447; that span reads NY.

This sequence in the N-terminal section; belongs to the N-acetylglucosamine-1-phosphate uridyltransferase family. The protein in the C-terminal section; belongs to the transferase hexapeptide repeat family. In terms of assembly, homotrimer. Mg(2+) is required as a cofactor.

It is found in the cytoplasm. It carries out the reaction alpha-D-glucosamine 1-phosphate + acetyl-CoA = N-acetyl-alpha-D-glucosamine 1-phosphate + CoA + H(+). The enzyme catalyses N-acetyl-alpha-D-glucosamine 1-phosphate + UTP + H(+) = UDP-N-acetyl-alpha-D-glucosamine + diphosphate. It functions in the pathway nucleotide-sugar biosynthesis; UDP-N-acetyl-alpha-D-glucosamine biosynthesis; N-acetyl-alpha-D-glucosamine 1-phosphate from alpha-D-glucosamine 6-phosphate (route II): step 2/2. The protein operates within nucleotide-sugar biosynthesis; UDP-N-acetyl-alpha-D-glucosamine biosynthesis; UDP-N-acetyl-alpha-D-glucosamine from N-acetyl-alpha-D-glucosamine 1-phosphate: step 1/1. Its pathway is bacterial outer membrane biogenesis; LPS lipid A biosynthesis. Catalyzes the last two sequential reactions in the de novo biosynthetic pathway for UDP-N-acetylglucosamine (UDP-GlcNAc). The C-terminal domain catalyzes the transfer of acetyl group from acetyl coenzyme A to glucosamine-1-phosphate (GlcN-1-P) to produce N-acetylglucosamine-1-phosphate (GlcNAc-1-P), which is converted into UDP-GlcNAc by the transfer of uridine 5-monophosphate (from uridine 5-triphosphate), a reaction catalyzed by the N-terminal domain. The chain is Bifunctional protein GlmU from Aquifex aeolicus (strain VF5).